Here is a 205-residue protein sequence, read N- to C-terminus: Cytochrome c oxidase subunit 3 (205 aa).

The next 5 membrane-spanning stretches (helical) occupy residues 29 to 49 (TIVF…MYFV), 73 to 93 (LAIT…VFAA), 104 to 124 (WFLI…YEYF), 144 to 164 (ITTG…VVVL), and 184 to 204 (SYYW…IYFI).

It belongs to the cytochrome c oxidase subunit 3 family. In terms of assembly, associates with subunits I, II and IV to form cytochrome c oxidase.

It is found in the cell membrane. The catalysed reaction is 4 Fe(II)-[cytochrome c] + O2 + 8 H(+)(in) = 4 Fe(III)-[cytochrome c] + 2 H2O + 4 H(+)(out). In Corynebacterium efficiens (strain DSM 44549 / YS-314 / AJ 12310 / JCM 11189 / NBRC 100395), this protein is Cytochrome c oxidase subunit 3 (ctaE).